Consider the following 660-residue polypeptide: Acetyl-coenzyme A synthetase (660 aa).

CoA contacts are provided by residues 197–200 (RGGK) and threonine 317. Residues 397–399 (GEP), 421–426 (DTWWQT), aspartate 512, and arginine 528 each bind ATP. CoA is bound at residue serine 536. Arginine 539 lines the ATP pocket. The Mg(2+) site is built by valine 550 and valine 555. Position 625 is an N6-acetyllysine (lysine 625).

Belongs to the ATP-dependent AMP-binding enzyme family. The cofactor is Mg(2+). Acetylated. Deacetylation by the SIR2-homolog deacetylase activates the enzyme.

The catalysed reaction is acetate + ATP + CoA = acetyl-CoA + AMP + diphosphate. Functionally, catalyzes the conversion of acetate into acetyl-CoA (AcCoA), an essential intermediate at the junction of anabolic and catabolic pathways. AcsA undergoes a two-step reaction. In the first half reaction, AcsA combines acetate with ATP to form acetyl-adenylate (AcAMP) intermediate. In the second half reaction, it can then transfer the acetyl group from AcAMP to the sulfhydryl group of CoA, forming the product AcCoA. The polypeptide is Acetyl-coenzyme A synthetase (Paraburkholderia phymatum (strain DSM 17167 / CIP 108236 / LMG 21445 / STM815) (Burkholderia phymatum)).